The sequence spans 617 residues: Dihydroxy-acid dehydratase (617 aa).

Position 81 (Asp81) interacts with Mg(2+). [2Fe-2S] cluster is bound at residue Cys122. Asp123 and Lys124 together coordinate Mg(2+). Lys124 is modified (N6-carboxylysine). Cys197 provides a ligand contact to [2Fe-2S] cluster. Mg(2+) is bound at residue Glu493. Ser519 serves as the catalytic Proton acceptor.

The protein belongs to the IlvD/Edd family. Homodimer. It depends on [2Fe-2S] cluster as a cofactor. Requires Mg(2+) as cofactor.

It catalyses the reaction (2R)-2,3-dihydroxy-3-methylbutanoate = 3-methyl-2-oxobutanoate + H2O. The enzyme catalyses (2R,3R)-2,3-dihydroxy-3-methylpentanoate = (S)-3-methyl-2-oxopentanoate + H2O. It participates in amino-acid biosynthesis; L-isoleucine biosynthesis; L-isoleucine from 2-oxobutanoate: step 3/4. The protein operates within amino-acid biosynthesis; L-valine biosynthesis; L-valine from pyruvate: step 3/4. Functions in the biosynthesis of branched-chain amino acids. Catalyzes the dehydration of (2R,3R)-2,3-dihydroxy-3-methylpentanoate (2,3-dihydroxy-3-methylvalerate) into 2-oxo-3-methylpentanoate (2-oxo-3-methylvalerate) and of (2R)-2,3-dihydroxy-3-methylbutanoate (2,3-dihydroxyisovalerate) into 2-oxo-3-methylbutanoate (2-oxoisovalerate), the penultimate precursor to L-isoleucine and L-valine, respectively. This is Dihydroxy-acid dehydratase from Corynebacterium aurimucosum (strain ATCC 700975 / DSM 44827 / CIP 107346 / CN-1) (Corynebacterium nigricans).